The primary structure comprises 563 residues: Pyruvate decarboxylase isozyme 1 (563 aa).

N-acetylserine is present on S2. Pyruvate-binding residues include D28, H115, and Y157. At R161 the chain carries Omega-N-methylarginine. A Glycyl lysine isopeptide (Lys-Gly) (interchain with G-Cter in ubiquitin) cross-link involves residue K212. S223 carries the phosphoserine modification. R224 provides a ligand contact to pyruvate. K233 participates in a covalent cross-link: Glycyl lysine isopeptide (Lys-Gly) (interchain with G-Cter in ubiquitin). Residue T266 is modified to Phosphothreonine. Glycyl lysine isopeptide (Lys-Gly) (interchain with G-Cter in ubiquitin) cross-links involve residues K269 and K332. Residues T336 and T353 each carry the phosphothreonine modification. Thiamine diphosphate is bound by residues T390 and 413–415 (GSI). D444 is a Mg(2+) binding site. Residues 445–446 (GS) and 471–476 (NDGYTI) each bind thiamine diphosphate. 2 residues coordinate Mg(2+): N471 and G473. E477 is a binding site for pyruvate. Glycyl lysine isopeptide (Lys-Gly) (interchain with G-Cter in ubiquitin) cross-links involve residues K484, K505, and K520. T522 is modified (phosphothreonine). Position 526 is a phosphoserine (S526).

The protein belongs to the TPP enzyme family. As to quaternary structure, homotetramer. Requires Mg(2+) as cofactor. Thiamine diphosphate is required as a cofactor. Cleavage of N-terminal methionine and N-terminal acetylation by NAT1/ARD1.

It is found in the cytoplasm. The protein resides in the nucleus. It catalyses the reaction pyruvate + H(+) = acetaldehyde + CO2. The enzyme catalyses 3-methyl-2-oxobutanoate + H(+) = 2-methylpropanal + CO2. The catalysed reaction is (S)-3-methyl-2-oxopentanoate + H(+) = 2-methylbutanal + CO2. It carries out the reaction indole-3-pyruvate + H(+) = indole-3-acetaldehyde + CO2. It catalyses the reaction 3-phenylpyruvate + H(+) = 2-phenylacetaldehyde + CO2. The enzyme catalyses 2-oxobutanoate + H(+) = propanal + CO2. The catalysed reaction is 2-oxopentanoate + H(+) = butanal + CO2. It carries out the reaction 2 acetaldehyde = acetoin. It catalyses the reaction acetaldehyde + pyruvate + H(+) = acetoin + CO2. It participates in fermentation; ethanol fermentation. The protein operates within amino-acid degradation; Ehrlich pathway. Its activity is regulated as follows. Allosterically activated by its substrate, pyruvate. Functionally, major of three pyruvate decarboxylases (PDC1, PDC5, PDC6) implicated in the nonoxidative conversion of pyruvate to acetaldehyde and carbon dioxide during alcoholic fermentation. Most of the produced acetaldehyde is subsequently reduced to ethanol, but some is required for cytosolic acetyl-CoA production for biosynthetic pathways. The enzyme is also one of five 2-oxo acid decarboxylases (PDC1, PDC5, PDC6, ARO10, and THI3) able to decarboxylate more complex 2-oxo acids (alpha-ketoacids) than pyruvate, which seem mainly involved in amino acid catabolism. Here the enzyme catalyzes the decarboxylation of amino acids, which, in a first step, have been transaminated to the corresponding 2-oxo acids. In a third step, the resulting aldehydes are reduced to alcohols, collectively referred to as fusel oils or alcohols. Its preferred substrates are the transaminated amino acids derived from threonine (2-oxobutanoate), norvaline (2-oxopentanoate), valine (3-methyl-2-oxobutanoate, also alpha-keto-isovalerate), isoleucine ((3S)-3-methyl-2-oxopentanoate, also alpha-keto-beta-methylvalerate), phenylalanine (phenylpyruvate), and tryptophan (3-(indol-3-yl)pyruvate), whereas transaminated leucine is no substrate. In a side-reaction the carbanionic intermediate (or active aldehyde) generated by decarboxylation or by activation of an aldehyde can react with an aldehyde via condensation (or carboligation) yielding a 2-hydroxy ketone, collectively called acyloins. The sequence is that of Pyruvate decarboxylase isozyme 1 from Saccharomyces cerevisiae (strain ATCC 204508 / S288c) (Baker's yeast).